The chain runs to 234 residues: Large ribosomal subunit protein uL1 (234 aa).

Belongs to the universal ribosomal protein uL1 family. As to quaternary structure, part of the 50S ribosomal subunit.

Binds directly to 23S rRNA. The L1 stalk is quite mobile in the ribosome, and is involved in E site tRNA release. Its function is as follows. Protein L1 is also a translational repressor protein, it controls the translation of the L11 operon by binding to its mRNA. In Anaeromyxobacter dehalogenans (strain 2CP-1 / ATCC BAA-258), this protein is Large ribosomal subunit protein uL1.